The sequence spans 258 residues: Imidazole glycerol phosphate synthase subunit HisF (258 aa).

Residues Asp11 and Asp130 contribute to the active site.

It belongs to the HisA/HisF family. Heterodimer of HisH and HisF.

Its subcellular location is the cytoplasm. It carries out the reaction 5-[(5-phospho-1-deoxy-D-ribulos-1-ylimino)methylamino]-1-(5-phospho-beta-D-ribosyl)imidazole-4-carboxamide + L-glutamine = D-erythro-1-(imidazol-4-yl)glycerol 3-phosphate + 5-amino-1-(5-phospho-beta-D-ribosyl)imidazole-4-carboxamide + L-glutamate + H(+). It participates in amino-acid biosynthesis; L-histidine biosynthesis; L-histidine from 5-phospho-alpha-D-ribose 1-diphosphate: step 5/9. Functionally, IGPS catalyzes the conversion of PRFAR and glutamine to IGP, AICAR and glutamate. The HisF subunit catalyzes the cyclization activity that produces IGP and AICAR from PRFAR using the ammonia provided by the HisH subunit. This Klebsiella pneumoniae (strain 342) protein is Imidazole glycerol phosphate synthase subunit HisF.